The chain runs to 210 residues: Chaperone protein TorD (210 aa).

The protein belongs to the TorD/DmsD family. TorD subfamily.

It localises to the cytoplasm. In terms of biological role, involved in the biogenesis of TorA. Acts on TorA before the insertion of the molybdenum cofactor and, as a result, probably favors a conformation of the apoenzyme that is competent for acquiring the cofactor. In Salmonella schwarzengrund (strain CVM19633), this protein is Chaperone protein TorD.